A 240-amino-acid chain; its full sequence is Ubiquinone biosynthesis O-methyltransferase (240 aa).

Residues R44, G64, D85, and M129 each contribute to the S-adenosyl-L-methionine site.

Belongs to the methyltransferase superfamily. UbiG/COQ3 family.

It catalyses the reaction a 3-demethylubiquinol + S-adenosyl-L-methionine = a ubiquinol + S-adenosyl-L-homocysteine + H(+). The enzyme catalyses a 3-(all-trans-polyprenyl)benzene-1,2-diol + S-adenosyl-L-methionine = a 2-methoxy-6-(all-trans-polyprenyl)phenol + S-adenosyl-L-homocysteine + H(+). The protein operates within cofactor biosynthesis; ubiquinone biosynthesis. In terms of biological role, O-methyltransferase that catalyzes the 2 O-methylation steps in the ubiquinone biosynthetic pathway. This is Ubiquinone biosynthesis O-methyltransferase from Escherichia coli O8 (strain IAI1).